Reading from the N-terminus, the 125-residue chain is Large ribosomal subunit protein bL12 (125 aa).

This sequence belongs to the bacterial ribosomal protein bL12 family. Homodimer. Part of the ribosomal stalk of the 50S ribosomal subunit. Forms a multimeric L10(L12)X complex, where L10 forms an elongated spine to which 2 to 4 L12 dimers bind in a sequential fashion. Binds GTP-bound translation factors.

Its function is as follows. Forms part of the ribosomal stalk which helps the ribosome interact with GTP-bound translation factors. Is thus essential for accurate translation. The chain is Large ribosomal subunit protein bL12 from Cereibacter sphaeroides (strain ATCC 17023 / DSM 158 / JCM 6121 / CCUG 31486 / LMG 2827 / NBRC 12203 / NCIMB 8253 / ATH 2.4.1.) (Rhodobacter sphaeroides).